Here is a 420-residue protein sequence, read N- to C-terminus: Tryptophan synthase beta chain (420 aa).

At lysine 112 the chain carries N6-(pyridoxal phosphate)lysine.

The protein belongs to the TrpB family. As to quaternary structure, tetramer of two alpha and two beta chains. Requires pyridoxal 5'-phosphate as cofactor.

The catalysed reaction is (1S,2R)-1-C-(indol-3-yl)glycerol 3-phosphate + L-serine = D-glyceraldehyde 3-phosphate + L-tryptophan + H2O. Its pathway is amino-acid biosynthesis; L-tryptophan biosynthesis; L-tryptophan from chorismate: step 5/5. In terms of biological role, the beta subunit is responsible for the synthesis of L-tryptophan from indole and L-serine. This chain is Tryptophan synthase beta chain, found in Thermosipho africanus (strain TCF52B).